The following is a 310-amino-acid chain: MVKVYAPASSANMSVGFDVLGAAVTPVDGALLGDVVTVEAAETFSLNNLGRFADKLPSEPRENIVYQCWERFCQELGKQIPVAMTLEKNMPIGSGLGSSACSVVAALMAMNEHCGKLLNDTRLLALMGELEGRISGSIHYDNVAPCFLGGMQLMIEENDIISQQVPGFDEWLWVLAYPGIKVSTAEARAILPAQYRRQDCIAHGRHLAGFIHACYSRQPELAAKLMKDVIAEPYRERLLPGFRQARQAVAEIGAVASGISGSGPTLFALCDKPDTAQRVADWLGKNYLQNQEGFVHICRLDTAGARVLEN.

Proline 91 to cysteine 101 provides a ligand contact to ATP.

It belongs to the GHMP kinase family. Homoserine kinase subfamily.

It localises to the cytoplasm. It carries out the reaction L-homoserine + ATP = O-phospho-L-homoserine + ADP + H(+). It participates in amino-acid biosynthesis; L-threonine biosynthesis; L-threonine from L-aspartate: step 4/5. In terms of biological role, catalyzes the ATP-dependent phosphorylation of L-homoserine to L-homoserine phosphate. This is Homoserine kinase from Escherichia coli O81 (strain ED1a).